The following is an 82-amino-acid chain: Omega-conotoxin-like TxMKLT1-031 (82 aa).

The signal sequence occupies residues 1 to 22 (MKLTCMMIVAVLFLTAWTLVMA). Positions 23-49 (DDSNNGLANLFSKSRDEMEDPEASKLE) are excised as a propeptide. 3 cysteine pairs are disulfide-bonded: C53–C71, C60–C76, and C70–C81.

It belongs to the conotoxin O1 superfamily. Expressed by the venom duct.

It is found in the secreted. Omega-conotoxins act at presynaptic membranes, they bind and block voltage-gated calcium channels (Cav). This is Omega-conotoxin-like TxMKLT1-031 from Conus textile (Cloth-of-gold cone).